The following is a 352-amino-acid chain: Selenide, water dikinase (352 aa).

The active site involves C23. ATP contacts are provided by residues K26 and 54–56 (SRD). D57 contributes to the Mg(2+) binding site. ATP contacts are provided by residues D74, D97, and 145–147 (GHS). Position 97 (D97) interacts with Mg(2+). D233 provides a ligand contact to Mg(2+).

Belongs to the selenophosphate synthase 1 family. Class I subfamily. As to quaternary structure, homodimer. The cofactor is Mg(2+).

The enzyme catalyses hydrogenselenide + ATP + H2O = selenophosphate + AMP + phosphate + 2 H(+). Its function is as follows. Synthesizes selenophosphate from selenide and ATP. In Shewanella baltica (strain OS155 / ATCC BAA-1091), this protein is Selenide, water dikinase.